We begin with the raw amino-acid sequence, 324 residues long: Carbamate kinase (324 aa).

The protein belongs to the carbamate kinase family.

It localises to the cytoplasm. It carries out the reaction hydrogencarbonate + NH4(+) + ATP = carbamoyl phosphate + ADP + H2O + H(+). It functions in the pathway amino-acid degradation; L-arginine degradation via ADI pathway. The protein is Carbamate kinase of Rhizobium meliloti (strain 1021) (Ensifer meliloti).